The primary structure comprises 735 residues: Photosystem I P700 chlorophyll a apoprotein A2 (735 aa).

A run of 8 helical transmembrane segments spans residues 47–70, 136–159, 176–200, 274–292, 331–354, 370–396, 418–440, and 518–536; these read IFASHFGQLAIIFLWTSGNLFHVA, LYVGSVFLALVSAIFLFAGWLHLQ, LNHHLSGLFGVSSLAWTGHLVHVAI, MAHHHLAIAVLFIVAGHMY, LHFQLGLALASVGTICSLVAQHMY, AALYTHHQYIAGFIMCGAFAHGAIFWI, AIISHLSWVSLFLGFHTLGLYVH, and FLVHHAIALGLHTTTLILV. Residues Cys-560 and Cys-569 each contribute to the [4Fe-4S] cluster site. Transmembrane regions (helical) follow at residues 576 to 597 and 644 to 666; these read AFYLAVFWMLNTIGWVTFYWHW and LSVWAWMFLAGHLVYATGFMFLI. Chlorophyll a-binding residues include His-655, Met-663, and Tyr-671. Trp-672 serves as a coordination point for phylloquinone. Residues 708 to 728 form a helical membrane-spanning segment; sequence LVGLAHFSVGYVFTYAAFVIA.

It belongs to the PsaA/PsaB family. The PsaA/B heterodimer binds the P700 chlorophyll special pair and subsequent electron acceptors. PSI consists of a core antenna complex that captures photons, and an electron transfer chain that converts photonic excitation into a charge separation. The eukaryotic PSI reaction center is composed of at least 11 subunits. It depends on P700 is a chlorophyll a/chlorophyll a' dimer, A0 is one or more chlorophyll a, A1 is one or both phylloquinones and FX is a shared 4Fe-4S iron-sulfur center. as a cofactor.

It localises to the plastid. The protein localises to the chloroplast thylakoid membrane. The enzyme catalyses reduced [plastocyanin] + hnu + oxidized [2Fe-2S]-[ferredoxin] = oxidized [plastocyanin] + reduced [2Fe-2S]-[ferredoxin]. In terms of biological role, psaA and PsaB bind P700, the primary electron donor of photosystem I (PSI), as well as the electron acceptors A0, A1 and FX. PSI is a plastocyanin/cytochrome c6-ferredoxin oxidoreductase, converting photonic excitation into a charge separation, which transfers an electron from the donor P700 chlorophyll pair to the spectroscopically characterized acceptors A0, A1, FX, FA and FB in turn. Oxidized P700 is reduced on the lumenal side of the thylakoid membrane by plastocyanin or cytochrome c6. This Tetradesmus obliquus (Green alga) protein is Photosystem I P700 chlorophyll a apoprotein A2.